The primary structure comprises 146 residues: ATP synthase F(0) complex subunit C2, mitochondrial (146 aa).

A mitochondrion-targeting transit peptide spans 1 to 71 (MYACSKFVST…RSFQTSAISR (71 aa)). A helical transmembrane segment spans residues 87-107 (VGVAGSGAGIGTVFGSLIIGY). Lys-114 bears the N6,N6,N6-trimethyllysine mark. Residues 122-142 (ILGFALSEAMGLFCLMVAFLI) traverse the membrane as a helical segment.

This sequence belongs to the ATPase C chain family. F-type ATPases have 2 components, CF(1) - the catalytic core - and CF(0) - the membrane proton channel. CF(1) has five subunits: alpha(3), beta(3), gamma(1), delta(1), epsilon(1). CF(0) has three main subunits: a, b and c. Interacts with DNAJC30; interaction is direct. Post-translationally, trimethylated by ATPSCKMT at Lys-114. Methylation is required for proper incorporation of the C subunit into the ATP synthase complex and mitochondrial respiration.

The protein resides in the mitochondrion membrane. Its function is as follows. Mitochondrial membrane ATP synthase (F(1)F(0) ATP synthase or Complex V) produces ATP from ADP in the presence of a proton gradient across the membrane which is generated by electron transport complexes of the respiratory chain. F-type ATPases consist of two structural domains, F(1) - containing the extramembraneous catalytic core and F(0) - containing the membrane proton channel, linked together by a central stalk and a peripheral stalk. During catalysis, ATP synthesis in the catalytic domain of F(1) is coupled via a rotary mechanism of the central stalk subunits to proton translocation. Part of the complex F(0) domain. A homomeric c-ring of probably 10 subunits is part of the complex rotary element. The protein is ATP synthase F(0) complex subunit C2, mitochondrial of Mus musculus (Mouse).